The chain runs to 229 residues: PKHD-type hydroxylase BBta_1313 (229 aa).

A Fe2OG dioxygenase domain is found at 78-180 (HIFPPLFNRY…RIASFFWLQS (103 aa)). Fe cation is bound by residues H98, D100, and H161. Residue R171 participates in 2-oxoglutarate binding.

The cofactor is Fe(2+). L-ascorbate serves as cofactor.

This Bradyrhizobium sp. (strain BTAi1 / ATCC BAA-1182) protein is PKHD-type hydroxylase BBta_1313.